We begin with the raw amino-acid sequence, 307 residues long: Homoserine kinase (307 aa).

ATP is bound at residue 95 to 105 (PQSRGLGSSAS).

Belongs to the GHMP kinase family. Homoserine kinase subfamily.

It is found in the cytoplasm. The catalysed reaction is L-homoserine + ATP = O-phospho-L-homoserine + ADP + H(+). Its pathway is amino-acid biosynthesis; L-threonine biosynthesis; L-threonine from L-aspartate: step 4/5. Functionally, catalyzes the ATP-dependent phosphorylation of L-homoserine to L-homoserine phosphate. The chain is Homoserine kinase from Corynebacterium aurimucosum (strain ATCC 700975 / DSM 44827 / CIP 107346 / CN-1) (Corynebacterium nigricans).